A 400-amino-acid polypeptide reads, in one-letter code: MKAIIIIAGSEFVQGRKQDKNGLFIAKNLFERGVDVQGIIISPDSHYELLNYIKFALDRADLVFISGGLGPTTDDNTRMAVSEAIGVPLIYNEEWLNKLKTYYKSNNVEITEERKSMAKIPYGSAIIENPVGRAVGFIKVLDDIKKAVVALPGVPSEMEPMFYKALEMLNINEKKRYTKLFRVFGIKELDLNYLLNDMKDLSYNFSPKGIDVFLYDTTLESFKEKEKKIKDRLGTFIYAEDNLEMEEVVGKLLRENKKTVATAESSTGGLIVSRLVNVPGSSGYVLGGIVSYVNEVKINLLKVNEEDIKNFGAVSEPVAKQMVEGVRNLINSDLAVSDTGIAGPTGESPNKPLGLHYIGFTDGKETKVYKEIYQGSRNDVRLYISQFALNLIRLYLISNS.

The protein belongs to the CinA family.

The chain is CinA-like protein from Sulfurihydrogenibium sp. (strain YO3AOP1).